The following is a 308-amino-acid chain: Protein FdhE homolog (308 aa).

This sequence belongs to the FdhE family.

Its subcellular location is the cytoplasm. In terms of biological role, necessary for formate dehydrogenase activity. This chain is Protein FdhE homolog, found in Edwardsiella ictaluri (strain 93-146).